Consider the following 730-residue polypeptide: ABC transporter G family member 3 (730 aa).

The span at 1 to 28 (MEEIQSQSDLYRSSSSSASSPTSRVPSS) shows a compositional bias: low complexity. The disordered stretch occupies residues 1–100 (MEEIQSQSDL…MASPPVPEGG (100 aa)). Residues 47 to 56 (DSPEWEDTPD) show a composition bias toward acidic residues. The span at 72–91 (NDATTTPVSPSLSKMNSGSM) shows a compositional bias: polar residues. A Phosphoserine modification is found at serine 93. The ABC transporter domain maps to 114–356 (IAWKDLTVTM…FSNAGFPCPI (243 aa)). Residue 151 to 158 (GPAKSGKS) coordinates ATP. The region spanning 441 to 653 (TRVAVLTWRS…SIEGLLENEY (213 aa)) is the ABC transmembrane type-2 domain. 6 consecutive transmembrane segments (helical) span residues 465–485 (LILY…LGHS), 495–515 (AVFV…PSLL), 532–552 (AFVF…LMSI), 575–595 (VLNF…IACI), 600–620 (YWST…AGHF), and 689–709 (MLVL…LLRF).

This sequence belongs to the ABC transporter superfamily. ABCG family. Eye pigment precursor importer (TC 3.A.1.204) subfamily.

The protein localises to the membrane. This chain is ABC transporter G family member 3 (ABCG3), found in Arabidopsis thaliana (Mouse-ear cress).